Here is a 455-residue protein sequence, read N- to C-terminus: Hydroxymethylglutaryl-CoA synthase 2 (455 aa).

Residue Glu-86 is the Proton donor/acceptor of the active site. Cys-120 serves as the catalytic Acyl-thioester intermediate. (3S)-3-hydroxy-3-methylglutaryl-CoA is bound by residues Cys-120, Thr-161, Ser-211, His-255, Lys-264, Asn-329, and Ser-363. The active-site Proton donor/acceptor is His-255.

The protein belongs to the thiolase-like superfamily. HMG-CoA synthase family.

The enzyme catalyses acetoacetyl-CoA + acetyl-CoA + H2O = (3S)-3-hydroxy-3-methylglutaryl-CoA + CoA + H(+). The protein operates within metabolic intermediate biosynthesis; (R)-mevalonate biosynthesis; (R)-mevalonate from acetyl-CoA: step 2/3. In terms of biological role, this enzyme condenses acetyl-CoA with acetoacetyl-CoA to form HMG-CoA, which is the substrate for HMG-CoA reductase. This is Hydroxymethylglutaryl-CoA synthase 2 (HMGCS-2) from Blattella germanica (German cockroach).